Consider the following 190-residue polypeptide: MFSAQNKIKKDKNAEPTECEEQVAQALFDLENTNQELKSELKDLYINQAVHMDISGNRKAVVIYVPFRLRKAFRKIHPRLVRELEKKFSGKDVIFVTTRRIMRPPKKGAAVQRPRNRTLTSVHEAMLEDVAFPAEIVGKRTRYRLDGSKIMKVFLDAKEKNNTEYKLETMVGVYRKLTGKDVVFEYPVEA.

Position 1 is an N-acetylmethionine (M1). Positions 17-50 (TECEEQVAQALFDLENTNQELKSELKDLYINQAV) form a coiled coil.

Belongs to the eukaryotic ribosomal protein eS7 family.

The chain is Small ribosomal subunit protein eS7x (RPS7C) from Arabidopsis thaliana (Mouse-ear cress).